A 367-amino-acid chain; its full sequence is 3-dehydroquinate synthase (367 aa).

Residues 69 to 74 (DGESHK), 103 to 107 (GVIGD), 127 to 128 (TT), lysine 140, lysine 149, and 167 to 170 (TLAT) contribute to the NAD(+) site. Zn(2+) contacts are provided by glutamate 182, histidine 245, and histidine 262.

Belongs to the sugar phosphate cyclases superfamily. Dehydroquinate synthase family. Co(2+) serves as cofactor. The cofactor is Zn(2+). It depends on NAD(+) as a cofactor.

Its subcellular location is the cytoplasm. It catalyses the reaction 7-phospho-2-dehydro-3-deoxy-D-arabino-heptonate = 3-dehydroquinate + phosphate. Its pathway is metabolic intermediate biosynthesis; chorismate biosynthesis; chorismate from D-erythrose 4-phosphate and phosphoenolpyruvate: step 2/7. In terms of biological role, catalyzes the conversion of 3-deoxy-D-arabino-heptulosonate 7-phosphate (DAHP) to dehydroquinate (DHQ). The polypeptide is 3-dehydroquinate synthase (Stutzerimonas stutzeri (strain A1501) (Pseudomonas stutzeri)).